Here is a 150-residue protein sequence, read N- to C-terminus: Small ribosomal subunit protein uS11 (150 aa).

The segment at 126-150 (GRIEDVTPTPSDSTRRKGGRRGRRL) is disordered. Positions 141-150 (RKGGRRGRRL) are enriched in basic residues.

Belongs to the universal ribosomal protein uS11 family. Component of the small ribosomal subunit (SSU). Mature N.crassa ribosomes consist of a small (40S) and a large (60S) subunit. The 40S small subunit contains 1 molecule of ribosomal RNA (18S rRNA) and at least 32 different proteins. The large 60S subunit contains 3 rRNA molecules (26S, 5.8S and 5S rRNA) and at least 42 different proteins.

The protein localises to the cytoplasm. Functionally, component of the ribosome, a large ribonucleoprotein complex responsible for the synthesis of proteins in the cell. The small ribosomal subunit (SSU) binds messenger RNAs (mRNAs) and translates the encoded message by selecting cognate aminoacyl-transfer RNA (tRNA) molecules. The large subunit (LSU) contains the ribosomal catalytic site termed the peptidyl transferase center (PTC), which catalyzes the formation of peptide bonds, thereby polymerizing the amino acids delivered by tRNAs into a polypeptide chain. The nascent polypeptides leave the ribosome through a tunnel in the LSU and interact with protein factors that function in enzymatic processing, targeting, and the membrane insertion of nascent chains at the exit of the ribosomal tunnel. uS11 is involved in nucleolar processing of pre-18S ribosomal RNA and ribosome assembly. This chain is Small ribosomal subunit protein uS11 (rps-14), found in Neurospora crassa (strain ATCC 24698 / 74-OR23-1A / CBS 708.71 / DSM 1257 / FGSC 987).